We begin with the raw amino-acid sequence, 358 residues long: Isopentenyl-diphosphate delta-isomerase (358 aa).

Substrate is bound at residue 12–13 (RK). Residues 69 to 71 (AMT), Ser-99, and Asn-128 contribute to the FMN site. Gln-158 serves as a coordination point for substrate. Residue Glu-159 coordinates Mg(2+). Residues Lys-190, Thr-220, 267–269 (GIR), and 288–289 (AG) each bind FMN.

The protein belongs to the IPP isomerase type 2 family. As to quaternary structure, homooctamer. Dimer of tetramers. FMN serves as cofactor. The cofactor is NADPH. Requires Mg(2+) as cofactor.

It localises to the cytoplasm. The catalysed reaction is isopentenyl diphosphate = dimethylallyl diphosphate. In terms of biological role, involved in the biosynthesis of isoprenoids. Catalyzes the 1,3-allylic rearrangement of the homoallylic substrate isopentenyl (IPP) to its allylic isomer, dimethylallyl diphosphate (DMAPP). This is Isopentenyl-diphosphate delta-isomerase from Listeria welshimeri serovar 6b (strain ATCC 35897 / DSM 20650 / CCUG 15529 / CIP 8149 / NCTC 11857 / SLCC 5334 / V8).